Here is a 283-residue protein sequence, read N- to C-terminus: ATP synthase gamma chain (283 aa).

The protein belongs to the ATPase gamma chain family. F-type ATPases have 2 components, CF(1) - the catalytic core - and CF(0) - the membrane proton channel. CF(1) has five subunits: alpha(3), beta(3), gamma(1), delta(1), epsilon(1). CF(0) has three main subunits: a, b and c.

The protein localises to the cell membrane. Produces ATP from ADP in the presence of a proton gradient across the membrane. The gamma chain is believed to be important in regulating ATPase activity and the flow of protons through the CF(0) complex. The chain is ATP synthase gamma chain from Clostridium botulinum (strain Eklund 17B / Type B).